Consider the following 115-residue polypeptide: Small ribosomal subunit protein bS16 (115 aa).

The interval glycine 81–alanine 115 is disordered.

This sequence belongs to the bacterial ribosomal protein bS16 family.

In Gluconobacter oxydans (strain 621H) (Gluconobacter suboxydans), this protein is Small ribosomal subunit protein bS16.